Here is a 225-residue protein sequence, read N- to C-terminus: Phosphoserine phosphatase (225 aa).

Methionine 1 carries the N-acetylmethionine modification. Aspartate 20 acts as the Nucleophile in catalysis. Mg(2+) contacts are provided by aspartate 20 and aspartate 22. L-serine is bound at residue aspartate 20–aspartate 22. The Proton donor role is filled by aspartate 22. Methionine 52 is an O-phospho-L-serine binding site. Residue glycine 53 coordinates phosphate. L-serine contacts are provided by residues serine 109–glycine 111 and lysine 158. O-phospho-L-serine contacts are provided by residues serine 109–glycine 111 and lysine 158. Position 179 (aspartate 179) interacts with Mg(2+). Threonine 182 contacts O-phospho-L-serine. A phosphate-binding site is contributed by threonine 182.

This sequence belongs to the HAD-like hydrolase superfamily. SerB family. In terms of assembly, homodimer. Mg(2+) is required as a cofactor.

Its subcellular location is the cytoplasm. The protein resides in the cytosol. The catalysed reaction is O-phospho-L-serine + H2O = L-serine + phosphate. It catalyses the reaction O-phospho-D-serine + H2O = D-serine + phosphate. It participates in amino-acid biosynthesis; L-serine biosynthesis; L-serine from 3-phospho-D-glycerate: step 3/3. Its function is as follows. Catalyzes the last irreversible step in the biosynthesis of L-serine from carbohydrates, the dephosphorylation of O-phospho-L-serine to L-serine. L-serine can then be used in protein synthesis, to produce other amino acids, in nucleotide metabolism or in glutathione synthesis, or can be racemized to D-serine, a neuromodulator. May also act on O-phospho-D-serine. This Rattus norvegicus (Rat) protein is Phosphoserine phosphatase.